The primary structure comprises 65 residues: Sec-independent protein translocase protein TatA (65 aa).

The helical transmembrane segment at 9 to 29 threads the bilayer; sequence ILIIVLLVVVVFGVGKLPQVG. The interval 40 to 65 is disordered; sequence RKASTGEDAKEEVETKEETKPAEKSE. The span at 43 to 65 shows a compositional bias: basic and acidic residues; sequence STGEDAKEEVETKEETKPAEKSE.

Belongs to the TatA/E family. In terms of assembly, forms a complex with TatC.

It localises to the cell membrane. In terms of biological role, part of the twin-arginine translocation (Tat) system that transports large folded proteins containing a characteristic twin-arginine motif in their signal peptide across membranes. TatA could form the protein-conducting channel of the Tat system. This is Sec-independent protein translocase protein TatA from Dehalococcoides mccartyi (strain ATCC BAA-2100 / JCM 16839 / KCTC 5957 / BAV1).